The sequence spans 548 residues: C-type lectin domain family 4 member F (548 aa).

Topologically, residues 1-42 (MKEAELNRDMARYCTDNQCVSLQPQGLGPKSAALMAPRTLRH) are cytoplasmic. Residues 43–69 (VQVILALMVVTVIFSLLALFVVASQPW) traverse the membrane as a helical; Signal-anchor for type II membrane protein segment. Residues 70-548 (RPEWNKEPPS…STGWSAARVG (479 aa)) are Extracellular-facing. Residues Asn86, Asn92, Asn115, Asn132, Asn209, and Asn255 are each glycosylated (N-linked (GlcNAc...) asparagine). The C-type lectin domain occupies 438–538 (KFCTSQGAHL…GSSYPWVCKK (101 aa)). 2 disulfides stabilise this stretch: Cys440–Cys536 and Cys516–Cys528.

In terms of tissue distribution, kupffer cells.

It is found in the membrane. Its function is as follows. Receptor with an affinity for galactose and fucose. Could be involved in endocytosis. The polypeptide is C-type lectin domain family 4 member F (Clec4f) (Mus musculus (Mouse)).